The primary structure comprises 308 residues: Olfactory receptor 2D2 (308 aa).

At 1-25 (MRQINQTQVTEFLLLGLSDGPHTEQ) the chain is on the extracellular side. Asn-5 carries an N-linked (GlcNAc...) asparagine glycan. Residues 26 to 49 (LLFIVLLGVYLVTVLGNLLLISLV) traverse the membrane as a helical segment. Over 50–57 (HVDSQLHT) the chain is Cytoplasmic. A helical membrane pass occupies residues 58–79 (PMYFFLCNLSLADLCFSTNIVP). Residues 80 to 100 (QALVHLLSRKKVIAFTLCAAR) lie on the Extracellular side of the membrane. A helical transmembrane segment spans residues 101 to 120 (LLFFLIFGCTQCALLAVMSY). Over 121-139 (DRYVAICNPLRYPNIMTWK) the chain is Cytoplasmic. The helical transmembrane segment at 140–158 (VCVQLATGSWTSGILVSVV) threads the bilayer. Residues 159–195 (DTTFILRLPYRGSNSIAHFFCEAPALLILASTDTHAS) lie on the Extracellular side of the membrane. The helical transmembrane segment at 196–219 (EMAIFLMGVVILLIPVFLILVSYG) threads the bilayer. At 220–236 (RIIVTVVKMKSTVGSLK) the chain is on the cytoplasmic side. The helical transmembrane segment at 237-259 (AFSTCGSHLMVVILFYGSAIITY) threads the bilayer. At 260-270 (MTPKSSKQQEK) the chain is on the extracellular side. The helical transmembrane segment at 271-290 (SVSVFYAIVTPMLNPLIYSL) threads the bilayer. Residues 291–308 (RNKDVKAALRKVATRNFP) are Cytoplasmic-facing.

Belongs to the G-protein coupled receptor 1 family.

The protein resides in the cell membrane. Functionally, odorant receptor. This is Olfactory receptor 2D2 (OR2D2) from Homo sapiens (Human).